A 395-amino-acid chain; its full sequence is Tryptophan synthase beta chain (395 aa).

K86 is subject to N6-(pyridoxal phosphate)lysine.

It belongs to the TrpB family. Tetramer of two alpha and two beta chains. It depends on pyridoxal 5'-phosphate as a cofactor.

It carries out the reaction (1S,2R)-1-C-(indol-3-yl)glycerol 3-phosphate + L-serine = D-glyceraldehyde 3-phosphate + L-tryptophan + H2O. It participates in amino-acid biosynthesis; L-tryptophan biosynthesis; L-tryptophan from chorismate: step 5/5. Functionally, the beta subunit is responsible for the synthesis of L-tryptophan from indole and L-serine. This is Tryptophan synthase beta chain from Pseudoalteromonas atlantica (strain T6c / ATCC BAA-1087).